The following is a 1275-amino-acid chain: Serine/threonine-protein kinase ULK4 (1275 aa).

The Protein kinase domain occupies 4–280; the sequence is FILYEEIGRG…WTRLLQHSFW (277 aa). Residue Asp121 is the Proton acceptor of the active site. Disordered stretches follow at residues 299 to 346 and 359 to 393; these read SRNT…EFRP and FLLSSRPTPRTSTAVEVSPGEDRTHCSPQKTSPLT. Residues 336-346 are compositionally biased toward basic and acidic residues; that stretch reads FRLENPTEFRP. Polar residues-rich tracts occupy residues 363–373 and 384–393; these read SRPTPRTSTAV and CSPQKTSPLT. HEAT repeat units follow at residues 727–765, 842–880, 926–964, 1025–1063, 1151–1189, and 1213–1253; these read LIQEKDFVSTIIRLLESPSTYIRAKAFLVLLYILIYNRE, LKMCLPLMPIVLHLVTSQVFRPQVVTEEFLFSYGTILSH, STVVDYILPPLVSLVQSQNVEWRLFSLRLLSETTSLLVN, LVEESKLIPLIFEVTLEHQESILGNTMQSVIALLNNLVA, NRPLTDLISLLIPLLPNEDPEIFDVSSKCLSILVQLYGG, and PKEQ…LAPG.

Belongs to the protein kinase superfamily. Ser/Thr protein kinase family. APG1/unc-51/ULK1 subfamily.

It catalyses the reaction L-seryl-[protein] + ATP = O-phospho-L-seryl-[protein] + ADP + H(+). The catalysed reaction is L-threonyl-[protein] + ATP = O-phospho-L-threonyl-[protein] + ADP + H(+). In terms of biological role, may be involved in the remodeling of cytoskeletal components, such as alpha-tubulin, and in this way regulates neurite branching and elongation, as well as cell motility. This chain is Serine/threonine-protein kinase ULK4 (ULK4), found in Pongo abelii (Sumatran orangutan).